The following is a 134-amino-acid chain: UPF0412 protein YaaI (134 aa).

The signal sequence occupies residues 1–23; it reads MKSVFTLSASLAISLLLCCTAQA.

This sequence belongs to the UPF0412 family.

This chain is UPF0412 protein YaaI, found in Escherichia coli (strain SMS-3-5 / SECEC).